Reading from the N-terminus, the 349-residue chain is 5-deoxyribose 1-phosphate isomerase (349 aa).

Substrate contacts are provided by residues 49–51, R92, and Q199; that span reads RGA. D240 (proton donor) is an active-site residue. Position 250–251 (250–251) interacts with substrate; it reads NK.

This sequence belongs to the EIF-2B alpha/beta/delta subunits family. DrdI subfamily.

It carries out the reaction 5-deoxy-alpha-D-ribose 1-phosphate = 5-deoxy-D-ribulose 1-phosphate. The protein operates within carbohydrate degradation. In terms of biological role, catalyzes the isomerization of 5-deoxy-alpha-D-ribose 1-phosphate to 5-deoxy-D-ribulose 1-phosphate, as part of a 5-deoxyribose salvage pathway that recycles this toxic radical SAM enzyme by-product to mainstream metabolites. The protein is 5-deoxyribose 1-phosphate isomerase of Clostridium botulinum (strain ATCC 19397 / Type A).